We begin with the raw amino-acid sequence, 360 residues long: mRNA cap guanine-N(7) methyltransferase (360 aa).

The interval 1–62 (MSSSNSRVHE…NRHENNGNAQ (62 aa)) is disordered. The span at 7-19 (RVHEEQPPTENRR) shows a compositional bias: basic and acidic residues. Residues 83–358 (SPIIQLKRFN…FYLAFAFEKR (276 aa)) form the mRNA cap 0 methyltransferase domain. 92 to 93 (NN) lines the mRNA pocket. The S-adenosyl-L-methionine site is built by lysine 96, glycine 118, aspartate 140, aspartate 168, glutamine 191, and tyrosine 196.

It belongs to the class I-like SAM-binding methyltransferase superfamily. mRNA cap 0 methyltransferase family. Interacts with cdk9.

Its subcellular location is the nucleus. The catalysed reaction is a 5'-end (5'-triphosphoguanosine)-ribonucleoside in mRNA + S-adenosyl-L-methionine = a 5'-end (N(7)-methyl 5'-triphosphoguanosine)-ribonucleoside in mRNA + S-adenosyl-L-homocysteine. Its function is as follows. Responsible for methylating the 5'-cap structure of mRNAs. In Schizosaccharomyces pombe (strain 972 / ATCC 24843) (Fission yeast), this protein is mRNA cap guanine-N(7) methyltransferase (pcm1).